Here is a 278-residue protein sequence, read N- to C-terminus: Octanoyltransferase LipM (278 aa).

One can recognise a BPL/LPL catalytic domain in the interval 33 to 248 (KKMPPTIRFY…GFEKGLDVEL (216 aa)). The Acyl-thioester intermediate role is filled by cysteine 150.

This sequence belongs to the octanoyltransferase LipM family. In terms of assembly, monomer.

It carries out the reaction octanoyl-[ACP] + L-lysyl-[protein] = N(6)-octanoyl-L-lysyl-[protein] + holo-[ACP] + H(+). The protein operates within protein modification; protein lipoylation via endogenous pathway; protein N(6)-(lipoyl)lysine from octanoyl-[acyl-carrier-protein]. In terms of biological role, catalyzes the transfer of endogenously produced octanoic acid from octanoyl-acyl-carrier-protein onto the lipoyl domain of GcvH, an intermediate carrier during protein lipoylation. The chain is Octanoyltransferase LipM from Bacillus cereus (strain ATCC 14579 / DSM 31 / CCUG 7414 / JCM 2152 / NBRC 15305 / NCIMB 9373 / NCTC 2599 / NRRL B-3711).